The primary structure comprises 276 residues: Sulfur carrier protein FdhD (276 aa).

The active-site Cysteine persulfide intermediate is the C120.

The protein belongs to the FdhD family.

It localises to the cytoplasm. Its function is as follows. Required for formate dehydrogenase (FDH) activity. Acts as a sulfur carrier protein that transfers sulfur from IscS to the molybdenum cofactor prior to its insertion into FDH. The polypeptide is Sulfur carrier protein FdhD (Bordetella bronchiseptica (strain ATCC BAA-588 / NCTC 13252 / RB50) (Alcaligenes bronchisepticus)).